Here is a 123-residue protein sequence, read N- to C-terminus: Crossover junction endodeoxyribonuclease Hjc (123 aa).

A Mg(2+)-binding site is contributed by glutamate 9. Serine 29 is a catalytic residue. Mg(2+) contacts are provided by aspartate 33 and glutamate 46.

The protein belongs to the Holliday junction resolvase Hjc family. As to quaternary structure, homodimer. Probably interacts with PCNA and RadB. Mg(2+) serves as cofactor. The cofactor is Mn(2+).

It catalyses the reaction Endonucleolytic cleavage at a junction such as a reciprocal single-stranded crossover between two homologous DNA duplexes (Holliday junction).. Cleavage inhibited by RadB in the absence (but not presence) of ATP. Functionally, a structure-specific endonuclease that resolves Holliday junction (HJ) intermediates during genetic recombination. Cleaves 4-way DNA junctions introducing paired nicks in opposing strands, leaving a 5'-terminal phosphate and a 3'-terminal hydroxyl group that are subsequently ligated to produce recombinant products. Cleaves both mobile and immobile junctions. Binds 4-way junction DNA, a synthetic Hj, binding is not competed by dsDNA. The chain is Crossover junction endodeoxyribonuclease Hjc from Pyrococcus furiosus (strain ATCC 43587 / DSM 3638 / JCM 8422 / Vc1).